Consider the following 1325-residue polypeptide: Zinc finger MYM-type protein 6 (1325 aa).

8 MYM-type zinc fingers span residues 113–151 (QLFC…PKDV), 163–206 (KDFC…RFEV), 213–248 (HGLC…SSGP), 296–334 (ELFC…QYHL), 342–443 (YSFC…KPEL), 451–485 (FLFC…KETV), 492–531 (KPFC…LVEN), and 538–572 (EEFC…SESI). Phosphoserine is present on S397. Positions 665-733 (ESTQEDAMKF…NDAELDSPPS (69 aa)) are disordered. The segment covering 695 to 706 (PVTQTKATSCKP) has biased composition (polar residues).

As to expression, expressed at high levels in heart, skeletal muscle, kidney and liver.

It localises to the nucleus. Plays a role in the regulation of cell morphology and cytoskeletal organization. This Homo sapiens (Human) protein is Zinc finger MYM-type protein 6 (ZMYM6).